Here is a 24-residue protein sequence, read N- to C-terminus: Iron-regulated 31 kDa protein (24 aa).

The protein localises to the periplasm. In terms of biological role, may be involved in iron uptake. The protein is Iron-regulated 31 kDa protein of Haemophilus influenzae.